The sequence spans 349 residues: Anthranilate phosphoribosyltransferase (349 aa).

5-phospho-alpha-D-ribose 1-diphosphate-binding positions include Gly82, 85–86 (GD), 92–95 (NVSS), 110–118 (KHGNRAVSG), and Ser122. Gly82 provides a ligand contact to anthranilate. Ser94 contributes to the Mg(2+) binding site. An anthranilate-binding site is contributed by Asn113. Anthranilate is bound at residue Arg168. Residues Asp227 and Glu228 each coordinate Mg(2+).

The protein belongs to the anthranilate phosphoribosyltransferase family. In terms of assembly, homodimer. It depends on Mg(2+) as a cofactor.

The catalysed reaction is N-(5-phospho-beta-D-ribosyl)anthranilate + diphosphate = 5-phospho-alpha-D-ribose 1-diphosphate + anthranilate. It participates in amino-acid biosynthesis; L-tryptophan biosynthesis; L-tryptophan from chorismate: step 2/5. Functionally, catalyzes the transfer of the phosphoribosyl group of 5-phosphorylribose-1-pyrophosphate (PRPP) to anthranilate to yield N-(5'-phosphoribosyl)-anthranilate (PRA). This Pseudomonas aeruginosa (strain LESB58) protein is Anthranilate phosphoribosyltransferase.